A 232-amino-acid polypeptide reads, in one-letter code: Peptidyl-prolyl cis-trans isomerase FKBP18, chloroplastic (232 aa).

The 119-residue stretch at G108–T226 folds into the PPIase FKBP-type domain.

Belongs to the FKBP-type PPIase family.

Its subcellular location is the plastid. The protein resides in the chloroplast thylakoid lumen. The catalysed reaction is [protein]-peptidylproline (omega=180) = [protein]-peptidylproline (omega=0). PPIases accelerate the folding of proteins. It catalyzes the cis-trans isomerization of proline imidic peptide bonds in oligopeptides. The sequence is that of Peptidyl-prolyl cis-trans isomerase FKBP18, chloroplastic (FKBP18) from Arabidopsis thaliana (Mouse-ear cress).